A 348-amino-acid chain; its full sequence is tRNA pseudouridine synthase D (348 aa).

Asp78 functions as the Nucleophile in the catalytic mechanism. The region spanning 150-304 (GLPNFFGPQR…AEGTRRAARL (155 aa)) is the TRUD domain.

It belongs to the pseudouridine synthase TruD family.

It catalyses the reaction uridine(13) in tRNA = pseudouridine(13) in tRNA. Functionally, responsible for synthesis of pseudouridine from uracil-13 in transfer RNAs. The protein is tRNA pseudouridine synthase D of Anaeromyxobacter dehalogenans (strain 2CP-1 / ATCC BAA-258).